A 389-amino-acid polypeptide reads, in one-letter code: Sulfate adenylyltransferase (389 aa).

The protein belongs to the sulfate adenylyltransferase family.

It catalyses the reaction sulfate + ATP + H(+) = adenosine 5'-phosphosulfate + diphosphate. It participates in sulfur metabolism; hydrogen sulfide biosynthesis; sulfite from sulfate: step 1/3. This chain is Sulfate adenylyltransferase, found in Deinococcus geothermalis (strain DSM 11300 / CIP 105573 / AG-3a).